A 237-amino-acid polypeptide reads, in one-letter code: MTTYFVTGTDTDAGKTLVASGLLALARRRGLTTLGLKPVASGCESTTEGLRNIDALTLQAQSMPTPPYATLNPYAYAPAIAPHLAARRAGRIPTLDALVAHVADPLAEKRDLTLIEGAGGWRVPLNDDEDLAGLAVRLELPVILVVGLELGCLNHARLSAEAIRADGLPLAGWVGNLIDPGLSFDEVADEACYRDNLATLERTLEAPCLGIVPRLAAATPDARAHAAADYLTLPGDA.

12-17 is an ATP binding site; the sequence is DAGKTL. Residue threonine 16 participates in Mg(2+) binding. Lysine 37 is an active-site residue. Serine 41 is a substrate binding site. Residues aspartate 54, 116 to 119, and 213 to 215 contribute to the ATP site; these read EGAG and PRL. Aspartate 54 and glutamate 116 together coordinate Mg(2+).

It belongs to the dethiobiotin synthetase family. In terms of assembly, homodimer. The cofactor is Mg(2+).

It is found in the cytoplasm. It catalyses the reaction (7R,8S)-7,8-diammoniononanoate + CO2 + ATP = (4R,5S)-dethiobiotin + ADP + phosphate + 3 H(+). It participates in cofactor biosynthesis; biotin biosynthesis; biotin from 7,8-diaminononanoate: step 1/2. Functionally, catalyzes a mechanistically unusual reaction, the ATP-dependent insertion of CO2 between the N7 and N8 nitrogen atoms of 7,8-diaminopelargonic acid (DAPA, also called 7,8-diammoniononanoate) to form a ureido ring. The protein is ATP-dependent dethiobiotin synthetase BioD of Chromohalobacter salexigens (strain ATCC BAA-138 / DSM 3043 / CIP 106854 / NCIMB 13768 / 1H11).